The chain runs to 272 residues: uncharacterized protein (272 aa).

The segment at 101 to 130 (CPTGKKNKAPSSLIPKISKTSTSSLTKEDE) is disordered. Residues 110–125 (PSSLIPKISKTSTSSL) show a composition bias toward low complexity. At serine 142 the chain carries Phosphoserine.

This is an uncharacterized protein from Arabidopsis thaliana (Mouse-ear cress).